A 297-amino-acid polypeptide reads, in one-letter code: ATP synthase F(1) complex subunit gamma, mitochondrial (297 aa).

The transit peptide at 1 to 25 (MFSRAGVAGLSAWTLQPQWIQVRNM) directs the protein to the mitochondrion. Residue Lys-39 is modified to N6-acetyllysine. Lys-49 carries the post-translational modification N6-succinyllysine. The residue at position 55 (Lys-55) is an N6-acetyllysine. Lys-115 bears the N6-acetyllysine; alternate mark. Residue Lys-115 is modified to N6-succinyllysine; alternate. Ser-146 is subject to Phosphoserine. An N6-acetyllysine; alternate modification is found at Lys-154. Lys-154 carries the N6-succinyllysine; alternate modification. N6-acetyllysine is present on Lys-197. Lys-270 is subject to N6-succinyllysine.

It belongs to the ATPase gamma chain family. In terms of assembly, component of the ATP synthase complex composed at least of ATP5F1A/subunit alpha, ATP5F1B/subunit beta, ATP5MC1/subunit c (homooctomer), MT-ATP6/subunit a, MT-ATP8/subunit 8, ATP5ME/subunit e, ATP5MF/subunit f, ATP5MG/subunit g, ATP5MK/subunit k, ATP5MJ/subunit j, ATP5F1C/subunit gamma, ATP5F1D/subunit delta, ATP5F1E/subunit epsilon, ATP5PF/subunit F6, ATP5PB/subunit b, ATP5PD/subunit d, ATP5PO/subunit OSCP. ATP synthase complex consists of a soluble F(1) head domain (subunits alpha(3) and beta(3)) - the catalytic core - and a membrane F(0) domain - the membrane proton channel (subunits c, a, 8, e, f, g, k and j). These two domains are linked by a central stalk (subunits gamma, delta, and epsilon) rotating inside the F1 region and a stationary peripheral stalk (subunits F6, b, d, and OSCP). Interacts with FLVCR2; this interaction occurs in the absence of heme and is disrupted upon heme binding.

It is found in the mitochondrion inner membrane. Functionally, subunit gamma, of the mitochondrial membrane ATP synthase complex (F(1)F(0) ATP synthase or Complex V) that produces ATP from ADP in the presence of a proton gradient across the membrane which is generated by electron transport complexes of the respiratory chain. ATP synthase complex consist of a soluble F(1) head domain - the catalytic core - and a membrane F(1) domain - the membrane proton channel. These two domains are linked by a central stalk rotating inside the F(1) region and a stationary peripheral stalk. During catalysis, ATP synthesis in the catalytic domain of F(1) is coupled via a rotary mechanism of the central stalk subunits to proton translocation. In vivo, can only synthesize ATP although its ATP hydrolase activity can be activated artificially in vitro. With the central stalk subunit delta, is essential for the biogenesis of F(1) catalytic part of the ATP synthase complex namely in the formation of F1 assembly intermediate. The chain is ATP synthase F(1) complex subunit gamma, mitochondrial from Pongo abelii (Sumatran orangutan).